Reading from the N-terminus, the 358-residue chain is L-tryptophan methyltransferase trpM (358 aa).

This sequence belongs to the methyltransferase superfamily.

The catalysed reaction is L-tryptophan + S-adenosyl-L-methionine = N(alpha)-methyl-L-tryptophan + S-adenosyl-L-homocysteine + H(+). The enzyme catalyses N(alpha)-methyl-L-tryptophan + S-adenosyl-L-methionine = N(alpha),N(alpha)-dimethyl-L-tryptophan + S-adenosyl-L-homocysteine + H(+). It carries out the reaction N(alpha),N(alpha)-dimethyl-L-tryptophan + S-adenosyl-L-methionine = N(alpha),N(alpha),N(alpha)-trimethyl-L-tryptophan + S-adenosyl-L-homocysteine + H(+). Methyltransferase that catalyzes iterative L-tryptophan N-methylations to produce L-abrine (N-alpha-methyl-L-tryptophan) and N,N-alpha-dimethyl-L-tryptophan. Also catalyzes a third methylation to yield L-hypaphorine (N,N,N-alpha-trimethyl-L-tryptopan), an agonist of the phytohormone indole-3-acetic acid. Can also N-methylate the non-native amino acid substrate 4-hydroxytryptophan, but the ability to incorporate trpM into a functional psilocybin biosynthesis pathway is indeed thwarted by the inability of the L-tryptophan decarboxylase psiD to use N,N-dimethyl-4-hydroxytryptophan as substrate. In Psilocybe serbica, this protein is L-tryptophan methyltransferase trpM.